Here is a 681-residue protein sequence, read N- to C-terminus: 2-(S-pantetheinyl)-carbapenam-3-carboxylate methyltransferase (681 aa).

Positions 1 to 144 constitute a B12-binding domain; sequence MTVPAARSGR…IERLADHPDY (144 aa). Residues N18, S72, Y74, V75, H103, G126, and E127 each contribute to the cob(II)alamin site. A Radical SAM core domain is found at 192–417; the sequence is RDLRFYALWE…RLYVEEPGTP (226 aa). [4Fe-4S] cluster-binding residues include C206 and C210. F212 contacts 5'-deoxyadenosine. [4Fe-4S] cluster is bound at residue C213. D214 and C249 together coordinate cob(II)alamin. 5'-deoxyadenosine-binding residues include Q312, E349, and G384.

Belongs to the methyltransferase superfamily. [4Fe-4S] cluster is required as a cofactor. Requires cob(II)alamin as cofactor.

It catalyses the reaction (2R,3R,5S)-2-(S-pantetheinyl)-carbapenam-3-carboxylate + AH2 + 2 S-adenosyl-L-methionine = (2R,3R,5S,6R)-6-(methyl)-2-(S-pantetheinyl)-carbapenam-3-carboxylate + 5'-deoxyadenosine + L-methionine + A + S-adenosyl-L-homocysteine + 2 H(+). It carries out the reaction (2R,3R,5S,6R)-6-(methyl)-2-(S-pantetheinyl)-carbapenam-3-carboxylate + AH2 + 2 S-adenosyl-L-methionine = (2R,3R,5S,6R)-6-(ethyl)-2-(S-pantetheinyl)-carbapenam-3-carboxylate + 5'-deoxyadenosine + L-methionine + A + S-adenosyl-L-homocysteine + 2 H(+). It participates in antibiotic biosynthesis. In terms of biological role, methyltransferase involved in the biosynthesis of the beta-lactam carbapenem antibiotic thienamycin. Catalyzes two consecutive S-adenosyl-L-methionine-dependent methylations to build out the C6-ethyl side chain in a stereocontrolled manner. In vitro can use methyl viologen and NADPH as the iron-sulfur cluster reductants. The protein is 2-(S-pantetheinyl)-carbapenam-3-carboxylate methyltransferase of Streptantibioticus cattleyicolor (strain ATCC 35852 / DSM 46488 / JCM 4925 / NBRC 14057 / NRRL 8057) (Streptomyces cattleya).